We begin with the raw amino-acid sequence, 739 residues long: Homeobox protein SIX5 (739 aa).

3 stretches are compositionally biased toward low complexity: residues Met-1–Ala-24, Gln-34–Ala-61, and Pro-74–Gly-83. Disordered stretches follow at residues Met-1–Leu-84, Asn-251–Val-294, Leu-361–Lys-381, and Leu-617–Pro-650. Residues Gly-201 to Ala-260 constitute a DNA-binding region (homeobox). Over residues Glu-279 to Arg-289 the composition is skewed to basic and acidic residues. Low complexity predominate over residues Leu-617–Asn-646.

This sequence belongs to the SIX/Sine oculis homeobox family. In terms of assembly, probably binds DNA dimer. Interacts with EYA3, and probably EYA1 and EYA2. In terms of tissue distribution, expressed in adult but not in fetal eyes. Found in corneal epithelium and endothelium, lens epithelium, ciliary body epithelia, cellular layers of the retina and the sclera.

The protein resides in the cytoplasm. The protein localises to the nucleus. In terms of biological role, transcription factor that is thought to be involved in regulation of organogenesis. May be involved in determination and maintenance of retina formation. Binds a 5'-GGTGTCAG-3' motif present in the ARE regulatory element of ATP1A1. Binds a 5'-TCA[AG][AG]TTNC-3' motif present in the MEF3 element in the myogenin promoter, and in the IGFBP5 promoter. Thought to be regulated by association with Dach and Eya proteins, and seems to be coactivated by EYA1, EYA2 and EYA3. In Homo sapiens (Human), this protein is Homeobox protein SIX5 (SIX5).